The sequence spans 259 residues: tRNA (guanine-N(1)-)-methyltransferase (259 aa).

S-adenosyl-L-methionine is bound by residues Gly-117 and 137 to 142 (LGDFVL).

This sequence belongs to the RNA methyltransferase TrmD family. Homodimer.

The protein resides in the cytoplasm. It catalyses the reaction guanosine(37) in tRNA + S-adenosyl-L-methionine = N(1)-methylguanosine(37) in tRNA + S-adenosyl-L-homocysteine + H(+). Specifically methylates guanosine-37 in various tRNAs. The sequence is that of tRNA (guanine-N(1)-)-methyltransferase from Polaromonas sp. (strain JS666 / ATCC BAA-500).